A 431-amino-acid polypeptide reads, in one-letter code: Keratin, type I cytoskeletal 18 (431 aa).

A head region spans residues 2–83 (SLRTSYSVRS…SGSTGEIMGN (82 aa)). Phosphoserine is present on Ser-12. Phosphothreonine is present on Thr-13. 2 positions are modified to phosphoserine: Ser-22 and Ser-36. Residues 84–119 (EKMAMQNLNDRLASYLEKVRILEQANSKLELKIREA) form a coil 1A region. An IF rod domain is found at 84–395 (EKMAMQNLND…RLLDGGDFKL (312 aa)). The segment at 120–136 (LEKRGPDVHDYSRFQPI) is linker 1. The interval 137-228 (VDELRKKIFD…KNHDNEVMEL (92 aa)) is coil 1B. The linker 12 stretch occupies residues 229–252 (RNQISQSGVQVDVDAPKGQDLSQI). Residues 253–390 (MEEIRAKYEK…IATYRRLLDG (138 aa)) form a coil 2 region. The interval 391–431 (GDFKLQDALEEQKKVKVMTVTQTLVDGKVVSSSTETKERKL) is tail.

This sequence belongs to the intermediate filament family. As to quaternary structure, heterotetramer of two type I and two type II keratins. Keratin-18 associates with keratin-8. Proteolytically cleaved by caspases during epithelial cell apoptosis. In terms of tissue distribution, expressed in simple epithelia such as intestinal mucosa, bile duct, hepatocytes, renal tubules, endothelia, ocular lens epithelium, and in a variety of mesenchymally-derived cells such as blood vessel endothelia, pillar gill cells, optic nerve glial cells, fibroblasts, interstitial cells, chondrocytes and ovarian theca cells. Also expressed in epidermis, pharyngeal mucosa, mucosa of anterior esophagus, gill mucosa and cornea.

Functionally, when phosphorylated, plays a role in filament reorganization. In Danio rerio (Zebrafish), this protein is Keratin, type I cytoskeletal 18.